Here is a 150-residue protein sequence, read N- to C-terminus: Ribonuclease H (150 aa).

The region spanning 1–141 is the RNase H type-1 domain; that stretch reads MKSIEVHTDG…VDVLARNQAI (141 aa). Residues D9, E47, D69, and D133 each coordinate Mg(2+).

This sequence belongs to the RNase H family. In terms of assembly, monomer. Mg(2+) serves as cofactor.

The protein resides in the cytoplasm. It catalyses the reaction Endonucleolytic cleavage to 5'-phosphomonoester.. Its function is as follows. Endonuclease that specifically degrades the RNA of RNA-DNA hybrids. The sequence is that of Ribonuclease H from Xanthomonas axonopodis pv. citri (strain 306).